The following is a 274-amino-acid chain: NADPH-dependent 7-cyano-7-deazaguanine reductase (274 aa).

80 to 82 (VES) provides a ligand contact to substrate. An NADPH-binding site is contributed by 82-83 (SK). Residue Cys181 is the Thioimide intermediate of the active site. Asp188 serves as the catalytic Proton donor. Residue 220–221 (HE) coordinates substrate. Residue 249–250 (RG) coordinates NADPH.

Belongs to the GTP cyclohydrolase I family. QueF type 2 subfamily. In terms of assembly, homodimer.

Its subcellular location is the cytoplasm. The catalysed reaction is 7-aminomethyl-7-carbaguanine + 2 NADP(+) = 7-cyano-7-deazaguanine + 2 NADPH + 3 H(+). It participates in tRNA modification; tRNA-queuosine biosynthesis. Catalyzes the NADPH-dependent reduction of 7-cyano-7-deazaguanine (preQ0) to 7-aminomethyl-7-deazaguanine (preQ1). This chain is NADPH-dependent 7-cyano-7-deazaguanine reductase, found in Burkholderia thailandensis (strain ATCC 700388 / DSM 13276 / CCUG 48851 / CIP 106301 / E264).